Consider the following 437-residue polypeptide: Trigger factor (437 aa).

One can recognise a PPIase FKBP-type domain in the interval 161–246 (GDQVNINFVG…VNSVSEAVLP (86 aa)).

It belongs to the FKBP-type PPIase family. Tig subfamily.

Its subcellular location is the cytoplasm. It catalyses the reaction [protein]-peptidylproline (omega=180) = [protein]-peptidylproline (omega=0). Involved in protein export. Acts as a chaperone by maintaining the newly synthesized protein in an open conformation. Functions as a peptidyl-prolyl cis-trans isomerase. This is Trigger factor from Cellvibrio japonicus (strain Ueda107) (Pseudomonas fluorescens subsp. cellulosa).